The chain runs to 482 residues: Nicotine dehydrogenase (482 aa).

Positions 1–38 (MSDKTKTNEGFSRRSFIGSAAVVTAGVAGLGAIDAASA) form a signal peptide, tat-type signal. The FAD site is built by Ala-64, Glu-83, Ala-84, Arg-85, Arg-91, Trp-108, and Val-279. Thr-381 provides a ligand contact to (S)-nicotine. Residues Ala-453, Asn-462, and Ile-463 each coordinate FAD.

It belongs to the flavin monoamine oxidase family. As to quaternary structure, monomer in solution. Homodimer in solution. Forms homodimers in the crystal. It depends on FAD as a cofactor. In terms of processing, predicted to be exported by the Tat system. The position of the signal peptide cleavage has not been experimentally proven.

It is found in the periplasm. The catalysed reaction is (S)-nicotine + 2 Fe(III)-[cytochrome c] = N-methylmyosmine + 2 Fe(II)-[cytochrome c] + 2 H(+). It participates in alkaloid degradation; nicotine degradation. The catalytic rate is not significantly affected by pH. Functionally, involved in nicotine degradation. Catalyzes the conversion of nicotine to N-methylmyosmine. N-methylmyosmine undergoes spontaneous hydrolysis to form pseudooxynicotine (PN). S-nicotine is the optimal substrate. Has lower activity with some nicotine analogs, but shows no activity towards neurotransmitters, including serotonin, dopamine, and norepinephrine, nicotine metabolites and common neuroactive drugs. The enzyme is stereospecific with poor activity with (R)-nicotine as the substrate. The c-type cytochrome protein CycN is the physiological electron acceptor. O(2) is a poor electron acceptor. The protein is Nicotine dehydrogenase of Pseudomonas putida (strain DSM 28022 / S16).